The following is a 641-amino-acid chain: Chaperone protein DnaK 2 (641 aa).

A Phosphothreonine; by autocatalysis modification is found at Thr199. A compositionally biased stretch (low complexity) spans 601–616 (MAQQQAQAQHAQSSQQ). A disordered region spans residues 601 to 641 (MAQQQAQAQHAQSSQQTNDTTGQSSTDDDVFEAEFEEVKDK). Residues 626–635 (TDDDVFEAEF) show a composition bias toward acidic residues.

It belongs to the heat shock protein 70 family.

Functionally, acts as a chaperone. In Photobacterium profundum (strain SS9), this protein is Chaperone protein DnaK 2.